We begin with the raw amino-acid sequence, 415 residues long: MGIQDARWPSEDEETHLLDSSSAEQTRGEKCSDSTPDVHIVEEYEDRAPATCQAPSTSTDTPVLSSSMICPPRQRVAHKCTQCGKCFIYRYELLEHQRLHTGENPYRCSQCGKAFRRTSDLSSHRRTQCIKAAYICIKCGNSFQSIQEKFRHQCVHSVQKFDCSQCGKSFKKMHLLGKHELTHTQNRIFTCRQCGKVYPGMSELRSHQKIHPPELSNQCMQCGKFFSSSACLTAHEVRHRQQRTQICARCGKAFKNKHDLNLHMRSHTGERPFQCTYCGKRFSVSGNLNIHVRTHTGEKPYLCSDCGKAFISAGELQIHRRTHTGEKPYKCSVCGRGFTMASKVTLHMRVHTGERPYVCSECGKGFSRGSELKKHSMNHTGVRPYACQLCAKTYTCLNHLKRHLKTHSVIQNQSV.

The disordered stretch occupies residues 1-36 (MGIQDARWPSEDEETHLLDSSSAEQTRGEKCSDSTP). C2H2-type zinc fingers lie at residues 78–100 (HKCT…QRLH), 106–129 (YRCS…RTQC), 134–156 (YICI…QCVH), 161–183 (FDCS…ELTH), 189–211 (FTCR…QKIH), 217–239 (NQCM…EVRH), 245–267 (QICA…MRSH), 273–295 (FQCT…VRTH), 301–323 (YLCS…RRTH), 329–351 (YKCS…MRVH), 357–379 (YVCS…SMNH), and 385–407 (YACQ…LKTH).

It is found in the nucleus. The protein is Zinc finger protein ZFMSA12A of Micropterus salmoides (Largemouth bass).